We begin with the raw amino-acid sequence, 406 residues long: Cysteine desulfurase (406 aa).

At lysine 226 the chain carries N6-(pyridoxal phosphate)lysine. The active-site Cysteine persulfide intermediate is the cysteine 364.

This sequence belongs to the class-V pyridoxal-phosphate-dependent aminotransferase family. Csd subfamily. As to quaternary structure, homodimer. Interacts with SufE and the SufBCD complex composed of SufB, SufC and SufD. The interaction with SufE is required to mediate the direct transfer of the sulfur atom from the S-sulfanylcysteine. Pyridoxal 5'-phosphate serves as cofactor.

The protein localises to the cytoplasm. It carries out the reaction (sulfur carrier)-H + L-cysteine = (sulfur carrier)-SH + L-alanine. The catalysed reaction is L-selenocysteine + AH2 = hydrogenselenide + L-alanine + A + H(+). It participates in cofactor biosynthesis; iron-sulfur cluster biosynthesis. Functionally, cysteine desulfurases mobilize the sulfur from L-cysteine to yield L-alanine, an essential step in sulfur metabolism for biosynthesis of a variety of sulfur-containing biomolecules. Component of the suf operon, which is activated and required under specific conditions such as oxidative stress and iron limitation. Acts as a potent selenocysteine lyase in vitro, that mobilizes selenium from L-selenocysteine. Selenocysteine lyase activity is however unsure in vivo. This Salmonella agona (strain SL483) protein is Cysteine desulfurase.